Reading from the N-terminus, the 382-residue chain is Succinyl-diaminopimelate desuccinylase (382 aa).

His73 lines the Zn(2+) pocket. Asp75 is a catalytic residue. Asp106 is a Zn(2+) binding site. Residue Glu140 is the Proton acceptor of the active site. Glu141, Glu169, and His355 together coordinate Zn(2+).

It belongs to the peptidase M20A family. DapE subfamily. In terms of assembly, homodimer. It depends on Zn(2+) as a cofactor. The cofactor is Co(2+).

It carries out the reaction N-succinyl-(2S,6S)-2,6-diaminopimelate + H2O = (2S,6S)-2,6-diaminopimelate + succinate. The protein operates within amino-acid biosynthesis; L-lysine biosynthesis via DAP pathway; LL-2,6-diaminopimelate from (S)-tetrahydrodipicolinate (succinylase route): step 3/3. Its function is as follows. Catalyzes the hydrolysis of N-succinyl-L,L-diaminopimelic acid (SDAP), forming succinate and LL-2,6-diaminopimelate (DAP), an intermediate involved in the bacterial biosynthesis of lysine and meso-diaminopimelic acid, an essential component of bacterial cell walls. In Leptothrix cholodnii (strain ATCC 51168 / LMG 8142 / SP-6) (Leptothrix discophora (strain SP-6)), this protein is Succinyl-diaminopimelate desuccinylase.